Here is a 69-residue protein sequence, read N- to C-terminus: Guanine nucleotide-binding protein G(I)/G(S)/G(O) subunit gamma-T2 (69 aa).

At C66 the chain carries Cysteine methyl ester. C66 is lipidated: S-farnesyl cysteine. The propeptide at 67 to 69 is removed in mature form; sequence LIS.

It belongs to the G protein gamma family. As to quaternary structure, g proteins are composed of 3 units, alpha, beta and gamma. Retinal cones.

The protein localises to the cell membrane. Guanine nucleotide-binding proteins (G proteins) are involved as a modulator or transducer in various transmembrane signaling systems. The beta and gamma chains are required for the GTPase activity, for replacement of GDP by GTP, and for G protein-effector interaction. The sequence is that of Guanine nucleotide-binding protein G(I)/G(S)/G(O) subunit gamma-T2 (GNGT2) from Homo sapiens (Human).